The primary structure comprises 433 residues: Homogentisate 1,2-dioxygenase (433 aa).

The active-site Proton acceptor is the His-288. 2 residues coordinate Fe cation: His-331 and Glu-337. Residues Tyr-346 and His-367 each coordinate homogentisate. His-367 serves as a coordination point for Fe cation.

It belongs to the homogentisate dioxygenase family. Hexamer; dimer of trimers. It depends on Fe cation as a cofactor.

The enzyme catalyses homogentisate + O2 = 4-maleylacetoacetate + H(+). It participates in amino-acid degradation; L-phenylalanine degradation; acetoacetate and fumarate from L-phenylalanine: step 4/6. In terms of biological role, involved in the catabolism of homogentisate (2,5-dihydroxyphenylacetate or 2,5-OH-PhAc), a central intermediate in the degradation of phenylalanine and tyrosine. Catalyzes the oxidative ring cleavage of the aromatic ring of homogentisate to yield maleylacetoacetate. The chain is Homogentisate 1,2-dioxygenase from Pseudomonas entomophila (strain L48).